The primary structure comprises 269 residues: uncharacterized protein (269 aa).

Residues 3-66 are a coiled coil; sequence VDQAAIDEIL…QNLQNLAEGA (64 aa). The tract at residues 83 to 142 is disordered; sequence AQIPEPPKPEPEVEQPETETGPEPEPEAEPELKEVKEDEPPEEDVVRELDESKSAEPIPE. A compositionally biased stretch (acidic residues) spans 94 to 111; that stretch reads EVEQPETETGPEPEPEAE. Positions 112-136 are enriched in basic and acidic residues; sequence PELKEVKEDEPPEEDVVRELDESKS.

This is an uncharacterized protein from Archaeoglobus fulgidus (strain ATCC 49558 / DSM 4304 / JCM 9628 / NBRC 100126 / VC-16).